A 595-amino-acid chain; its full sequence is MTTHCISTGERQRAVKAALGQLPFDLLLTNAALIDMATGEVRNVDVGIVGALIASVHPCGTLTEALQTQDLAGAYLSPGLIDTHVHVESSHLPPERYAEIVVAQGTTTIFWDPHELANVLGVAGVRYAVDASRGLPLRVICAAPSSVPSTPGLEMSGADFAGQEMETMLAWPEVGGVAEVMDMHGVLNGSERMLEILNAGLNSGKLIEGHARGLSGADLQAYLAAGVTSDHELTSGADALEKLRAGLTLEIRGSHPYLLPEIVAALKTLPHLSSQITVCTDDVPPDMLLEKGGIVALLNMLIEQGLPATDVLRMATLNAAIRLQRNDLGLIAAGRVADLVVFDSLTQLRAQQVYVAGKLTAQQGKMQKPLNANPNVAAPRDTLRLQPLAAGDFVLKVPAIRHGKATLRHIKGARFTQWNETTVEVRNGEVQIPQGFSLIWVQHRHGRHQATPQLALLEGWGELRGAIATSYSHDSHNLVVLGRDAADMALAANALIASGGGMALSQNGEILAQVAMPIAGMLSDLPAAELAQQFKNLRDLSARIADWEPPYRVFKAIEGTCLACNAGPHLTDLGLTDGSTRQIVDPLIACWETPA.

Belongs to the metallo-dependent hydrolases superfamily. Adenine deaminase family. As to quaternary structure, homodimer. Mn(2+) serves as cofactor.

It catalyses the reaction adenine + H2O + H(+) = hypoxanthine + NH4(+). The polypeptide is Adenine deaminase (Serratia proteamaculans (strain 568)).